The chain runs to 484 residues: T-complex protein 1 subunit delta (484 aa).

It belongs to the TCP-1 chaperonin family. In terms of assembly, component of the T-complex protein 1 (TCP1) complex.

The protein localises to the cytoplasm. Its function is as follows. Molecular chaperone; assists the folding of proteins upon ATP hydrolysis. The sequence is that of T-complex protein 1 subunit delta (CCT4) from Encephalitozoon cuniculi (strain GB-M1) (Microsporidian parasite).